The primary structure comprises 195 residues: HTH-type transcriptional regulator BetI (195 aa).

An HTH tetR-type domain is found at 8–68; that stretch reads EIRRAQLIDA…ATMRHVLRDL (61 aa). The H-T-H motif DNA-binding region spans 31–50; sequence TLASVAQRANISTGIVSHYF.

It participates in amine and polyamine biosynthesis; betaine biosynthesis via choline pathway [regulation]. In terms of biological role, repressor involved in the biosynthesis of the osmoprotectant glycine betaine. It represses transcription of the choline transporter BetT and the genes of BetAB involved in the synthesis of glycine betaine. The protein is HTH-type transcriptional regulator BetI of Burkholderia mallei (strain NCTC 10247).